Reading from the N-terminus, the 347-residue chain is DNA-directed RNA polymerase subunit alpha (347 aa).

Residues Met1–Asn226 form an alpha N-terminal domain (alpha-NTD) region. Residues Ala241 to Leu347 are alpha C-terminal domain (alpha-CTD).

Belongs to the RNA polymerase alpha chain family. As to quaternary structure, homodimer. The RNAP catalytic core consists of 2 alpha, 1 beta, 1 beta' and 1 omega subunit. When a sigma factor is associated with the core the holoenzyme is formed, which can initiate transcription.

It catalyses the reaction RNA(n) + a ribonucleoside 5'-triphosphate = RNA(n+1) + diphosphate. In terms of biological role, DNA-dependent RNA polymerase catalyzes the transcription of DNA into RNA using the four ribonucleoside triphosphates as substrates. The sequence is that of DNA-directed RNA polymerase subunit alpha from Mycobacterium ulcerans (strain Agy99).